Here is a 319-residue protein sequence, read N- to C-terminus: CCAAT/enhancer-binding protein homolog 1 (319 aa).

Residues 53–67 (SLTIAASLQQRDRER) form a n' domain; required for axon regeneration region. The tract at residues 163-319 (TRRAVKRPVP…QRHILENFNK (157 aa)) is disordered. Positions 171–181 (VPYDDYQKEYS) are enriched in basic and acidic residues. Over residues 182-198 (EESSDMTDNDGSVDDSY) the composition is skewed to acidic residues. Composition is skewed to basic and acidic residues over residues 225-248 (LKAD…DAVR), 255-274 (KELQ…RIAE), 281-291 (SERDARRRDQD), and 302-319 (PMKE…NFNK). Residues 233-308 (EPTYKLKRAR…NKGPMKEQRM (76 aa)) form the bZIP domain. Residues 237–271 (KLKRARNNDAVRKSRKKAKELQDKKEAEHDKMKRR) are basic motif. A leucine-zipper region spans residues 275 to 308 (LEGLLQSERDARRRDQDTLEQLLRNKGPMKEQRM).

It belongs to the bZIP family. C/EBP subfamily. May interact with transcription factor ets-4. May interact (via N-terminus) with nipi-3. May interact (via N-terminus) with importin subunit alpha ima-3. Expressed in touch and motor neurons.

It localises to the synapse. It is found in the cytoplasm. The protein localises to the nucleus. Its subcellular location is the cell projection. The protein resides in the axon. Its function is as follows. Transcription factor. Binds to promoter regions of target genes, perhaps at the motif 5'-[AGCT]TT[AGT][TC]GAAA[ACT]-3'. Modulates expression of genes involved in development and in stress responses, including those regulating the p38/MAPK signaling pathways such as MAPKK sek-1 and phosphatase vhp-1. Involved in innate immunity. Plays a role in repressing the response to infection by the Gram-negative bacterium P.aeruginosa, perhaps acting independently of the pmk-1 or pmk-3 p38/MAPK pathways. However, also plays a protective role in the response to infection by P.aeruginosa. Required in axonal regrowth following injury and synaptogenesis. Following axon injury, in concert with transcription factor ets-4, activates expression of receptor tyrosine kinase svh-2. May function downstream of the Ca2+-activated p38/MAPK pathway to promote axon regeneration. Plays a role in modulating polymerization of neuronal microtubules. Involved in modulating lipid homeostasis. This is CCAAT/enhancer-binding protein homolog 1 from Caenorhabditis elegans.